A 207-amino-acid polypeptide reads, in one-letter code: Large ribosomal subunit protein uL4 (207 aa).

The disordered stretch occupies residues 44 to 81; sequence KRQGTQSAKTRSEVRGGGRKPWRQKGTGRARQGSIRSP. Residues 60–71 show a composition bias toward basic residues; the sequence is GGRKPWRQKGTG.

This sequence belongs to the universal ribosomal protein uL4 family. Part of the 50S ribosomal subunit.

Functionally, one of the primary rRNA binding proteins, this protein initially binds near the 5'-end of the 23S rRNA. It is important during the early stages of 50S assembly. It makes multiple contacts with different domains of the 23S rRNA in the assembled 50S subunit and ribosome. Its function is as follows. Forms part of the polypeptide exit tunnel. The protein is Large ribosomal subunit protein uL4 of Finegoldia magna (strain ATCC 29328 / DSM 20472 / WAL 2508) (Peptostreptococcus magnus).